Here is a 257-residue protein sequence, read N- to C-terminus: Phosphatidylglycerol--prolipoprotein diacylglyceryl transferase (257 aa).

Transmembrane regions (helical) follow at residues 13–33, 49–69, 88–108, 123–143, 152–172, 186–202, and 223–243; these read FGPI…AVGG, FLLN…RLMF, IYEG…AGLY, FAVV…IFNH, FFFG…FLLI, YQFW…RGVF, and IGLF…AYWM. Arg136 lines the a 1,2-diacyl-sn-glycero-3-phospho-(1'-sn-glycerol) pocket.

Belongs to the Lgt family.

It localises to the cell membrane. It catalyses the reaction L-cysteinyl-[prolipoprotein] + a 1,2-diacyl-sn-glycero-3-phospho-(1'-sn-glycerol) = an S-1,2-diacyl-sn-glyceryl-L-cysteinyl-[prolipoprotein] + sn-glycerol 1-phosphate + H(+). It participates in protein modification; lipoprotein biosynthesis (diacylglyceryl transfer). Its function is as follows. Catalyzes the transfer of the diacylglyceryl group from phosphatidylglycerol to the sulfhydryl group of the N-terminal cysteine of a prolipoprotein, the first step in the formation of mature lipoproteins. The polypeptide is Phosphatidylglycerol--prolipoprotein diacylglyceryl transferase (Caldanaerobacter subterraneus subsp. tengcongensis (strain DSM 15242 / JCM 11007 / NBRC 100824 / MB4) (Thermoanaerobacter tengcongensis)).